Reading from the N-terminus, the 247-residue chain is Large ribosomal subunit protein uL30 (247 aa).

Met1 is subject to N-acetylmethionine. 4 tandem repeats follow at residues 7–17 (KKKVPAVPETL), 18–29 (KKKRRNFAELKI), 30–41 (KRLRKKFAQKML), and 42–53 (RKARRKLIYEKA). The interval 7 to 53 (KKKVPAVPETLKKKRRNFAELKIKRLRKKFAQKMLRKARRKLIYEKA) is 4 X 12 AA tandem repeats. Thr16 is subject to Phosphothreonine. Lys123 carries the post-translational modification N6-acetyllysine. The residue at position 126 (Lys126) is an N6-succinyllysine. Phosphotyrosine is present on Tyr138.

It belongs to the universal ribosomal protein uL30 family. In terms of assembly, component of the large ribosomal subunit. Homodimer. Interacts with DHX33.

It localises to the cytoplasm. In terms of biological role, component of the large ribosomal subunit. The ribosome is a large ribonucleoprotein complex responsible for the synthesis of proteins in the cell. Binds to G-rich structures in 28S rRNA and in mRNAs. Plays a regulatory role in the translation apparatus; inhibits cell-free translation of mRNAs. This Macaca fascicularis (Crab-eating macaque) protein is Large ribosomal subunit protein uL30 (RPL7).